A 366-amino-acid chain; its full sequence is MKLSIILGTRPEIIKLSPIIRALEKTNIDWHIIHTNQHYSENMDKIFFEELNLPNPKYNLNIGSGTHGEQTGKMLIEIEKVLLKEKPDVVVVQGDTNTVLAGALVASKLKIDVAHVEAGLRSFDRNMPEEINRVLTDHISSYLFAPTEIAKNNLLREGIEENKIFVVGNTIVDATLQNLKIAEKNENVRAFFNSVVIDDDYFLLTLHRAENVDNKERLKNIVEGIFEIIEIYDKAIIFSIHPRTKKRLKEFNLFDKLKSNKKIKIIEPVGYLEFLMLEKNAELILTDSGGVQEEACILKVPCITLRDNTERPETVEVGANILVGDNKEKLIKAVEIMLNKKRNWKNPFGNGKSGERIVRILTYGKY.

Histidine 207 is a catalytic residue.

This sequence belongs to the UDP-N-acetylglucosamine 2-epimerase family. In terms of assembly, homodimer.

The protein localises to the cytoplasm. It carries out the reaction UDP-N-acetyl-alpha-D-glucosamine = UDP-N-acetyl-alpha-D-mannosamine. Functionally, catalyzes the reversible epimerization at C-2 of UDP-N-acetylglucosamine (UDP-GlcNAc) to produce UDP-N-acetylmannosamine (UDP-ManNAc), the activated donor of ManNAc residues. This chain is UDP-N-acetylglucosamine 2-epimerase (wecB), found in Methanocaldococcus jannaschii (strain ATCC 43067 / DSM 2661 / JAL-1 / JCM 10045 / NBRC 100440) (Methanococcus jannaschii).